The primary structure comprises 433 residues: Adenylosuccinate synthetase (433 aa).

GTP is bound by residues 13–19 (GDEGKGK) and 41–43 (GHT). Asp-14 serves as the catalytic Proton acceptor. Mg(2+) is bound by residues Asp-14 and Gly-41. Residues 14–17 (DEGK), 39–42 (NAGH), Thr-130, Arg-144, Gln-225, Thr-240, and Arg-304 contribute to the IMP site. Residue His-42 is the Proton donor of the active site. Residue 300–306 (STTGRKR) coordinates substrate. GTP contacts are provided by residues Arg-306, 332–334 (KLD), and 414–416 (STG).

Belongs to the adenylosuccinate synthetase family. In terms of assembly, homodimer. Requires Mg(2+) as cofactor.

It localises to the cytoplasm. It carries out the reaction IMP + L-aspartate + GTP = N(6)-(1,2-dicarboxyethyl)-AMP + GDP + phosphate + 2 H(+). Its pathway is purine metabolism; AMP biosynthesis via de novo pathway; AMP from IMP: step 1/2. Its function is as follows. Plays an important role in the de novo pathway of purine nucleotide biosynthesis. Catalyzes the first committed step in the biosynthesis of AMP from IMP. This chain is Adenylosuccinate synthetase, found in Buchnera aphidicola subsp. Acyrthosiphon pisum (strain APS) (Acyrthosiphon pisum symbiotic bacterium).